The sequence spans 312 residues: Olfactory receptor 2B8 (312 aa).

Over 1-25 the chain is Extracellular; the sequence is MDQKNGSSFTGFILLGFSDRPQLEL. An N-linked (GlcNAc...) asparagine glycan is attached at Asn5. The chain crosses the membrane as a helical span at residues 26–49; it reads VLFVVLLIFYIFTLLGNKTIIVLS. Residues 50–57 are Cytoplasmic-facing; the sequence is HLDPHLHT. A helical membrane pass occupies residues 58 to 79; it reads PMYFFFSNLSFLDLCYTTGIVP. The Extracellular segment spans residues 80–100; sequence QLLVNLRGADKSISYGGCVVQ. A disulfide bond links Cys97 and Cys189. The chain crosses the membrane as a helical span at residues 101 to 120; it reads LYISLGLGSTECVLLGVMVF. At 121-139 the chain is on the cytoplasmic side; the sequence is DRYAAVCRPLHYTVVMHPC. Residues 140-158 form a helical membrane-spanning segment; that stretch reads LYVLMASTSWVIGFANSLL. Over 159–195 the chain is Extracellular; the sequence is QTVLILLLTLCGRNKLEHFLCEVPPLLKLACVDTTMN. Asn195 is a glycosylation site (N-linked (GlcNAc...) asparagine). A helical membrane pass occupies residues 196–219; sequence ESELFFVSVIILLVPVALIIFSYS. Topologically, residues 220-236 are cytoplasmic; the sequence is QIVRAVMRIKLATGQRK. A helical transmembrane segment spans residues 237-259; the sequence is VFGTCGSHLTVVSLFYGTAIYAY. At 260-272 the chain is on the extracellular side; sequence LQPGNNYSQDQGK. Asn265 carries an N-linked (GlcNAc...) asparagine glycan. The chain crosses the membrane as a helical span at residues 273–292; that stretch reads FISLFYTIITPMINPLIYTL. At 293 to 312 the chain is on the cytoplasmic side; it reads RNKDVKGALKKVLWKNYDSR.

This sequence belongs to the G-protein coupled receptor 1 family.

It localises to the cell membrane. Its function is as follows. Odorant receptor. This is Olfactory receptor 2B8 from Homo sapiens (Human).